The following is an 88-amino-acid chain: Acyl-CoA-binding protein homolog (88 aa).

An ACB domain is found at 3 to 88 (PQADFDKAAG…AHELIEKYGL (86 aa)). Residues Lys-15, 30 to 34 (YGLYK), Lys-52, Lys-56, and Tyr-75 each bind an acyl-CoA.

It belongs to the ACBP family. As to expression, brain. Is selectively expressed in glial cells.

It localises to the endoplasmic reticulum. The protein resides in the golgi apparatus. May play important functions in the control of brain and pituitary activities. May regulate GABA neurotransmission through a paracrine and/or autocrine mechanism. May not bind acyl-CoA esters. The chain is Acyl-CoA-binding protein homolog from Pelophylax ridibundus (Marsh frog).